We begin with the raw amino-acid sequence, 198 residues long: Large ribosomal subunit protein bL25 (198 aa).

This sequence belongs to the bacterial ribosomal protein bL25 family. CTC subfamily. Part of the 50S ribosomal subunit; part of the 5S rRNA/L5/L18/L25 subcomplex. Contacts the 5S rRNA. Binds to the 5S rRNA independently of L5 and L18.

Its function is as follows. This is one of the proteins that binds to the 5S RNA in the ribosome where it forms part of the central protuberance. This chain is Large ribosomal subunit protein bL25, found in Phocaeicola vulgatus (strain ATCC 8482 / DSM 1447 / JCM 5826 / CCUG 4940 / NBRC 14291 / NCTC 11154) (Bacteroides vulgatus).